We begin with the raw amino-acid sequence, 264 residues long: ATP synthase subunit a (264 aa).

6 helical membrane passes run 29-49 (TWHI…LWLF), 90-110 (IAPL…MDMI), 134-154 (DLNI…YYSI), 177-197 (IPVN…SLAL), 208-228 (LIFI…ALGV), and 235-255 (LIFH…LTIV).

This sequence belongs to the ATPase A chain family. As to quaternary structure, F-type ATPases have 2 components, CF(1) - the catalytic core - and CF(0) - the membrane proton channel. CF(1) has five subunits: alpha(3), beta(3), gamma(1), delta(1), epsilon(1). CF(0) has three main subunits: a(1), b(2) and c(9-12). The alpha and beta chains form an alternating ring which encloses part of the gamma chain. CF(1) is attached to CF(0) by a central stalk formed by the gamma and epsilon chains, while a peripheral stalk is formed by the delta and b chains.

It localises to the cell inner membrane. Functionally, key component of the proton channel; it plays a direct role in the translocation of protons across the membrane. This Shewanella loihica (strain ATCC BAA-1088 / PV-4) protein is ATP synthase subunit a.